The primary structure comprises 134 residues: Small ribosomal subunit protein bS16 (134 aa).

Residues 79 to 134 (AGIAKRPSRNNPTKGEPGKKAQERLALAKQAEEEASAKAAEAAAAAAAPAEEAASE) are disordered. Positions 115 to 134 (AKAAEAAAAAAAPAEEAASE) are enriched in low complexity.

The protein belongs to the bacterial ribosomal protein bS16 family.

The chain is Small ribosomal subunit protein bS16 from Brucella abortus (strain S19).